The sequence spans 416 residues: Serine hydroxymethyltransferase (416 aa).

(6S)-5,6,7,8-tetrahydrofolate contacts are provided by residues Leu121 and 125 to 127 (GHL). The residue at position 229 (Lys229) is an N6-(pyridoxal phosphate)lysine.

It belongs to the SHMT family. Homodimer. Requires pyridoxal 5'-phosphate as cofactor.

It is found in the cytoplasm. It catalyses the reaction (6R)-5,10-methylene-5,6,7,8-tetrahydrofolate + glycine + H2O = (6S)-5,6,7,8-tetrahydrofolate + L-serine. It functions in the pathway one-carbon metabolism; tetrahydrofolate interconversion. It participates in amino-acid biosynthesis; glycine biosynthesis; glycine from L-serine: step 1/1. Functionally, catalyzes the reversible interconversion of serine and glycine with tetrahydrofolate (THF) serving as the one-carbon carrier. This reaction serves as the major source of one-carbon groups required for the biosynthesis of purines, thymidylate, methionine, and other important biomolecules. Also exhibits THF-independent aldolase activity toward beta-hydroxyamino acids, producing glycine and aldehydes, via a retro-aldol mechanism. The chain is Serine hydroxymethyltransferase from Neisseria gonorrhoeae.